The chain runs to 294 residues: 7,8-dihydropterin-6-methyl-4-(beta-D-ribofuranosyl)-aminobenzene-5'-phosphate synthase (294 aa).

Positions 116, 186, 228, and 265 each coordinate substrate.

It belongs to the metallo-beta-lactamase superfamily. The cofactor is Mg(2+).

It carries out the reaction 4-(beta-D-ribofuranosyl)aminobenzene 5'-phosphate + (7,8-dihydropterin-6-yl)methyl diphosphate = N-[(7,8-dihydropterin-6-yl)methyl]-4-(beta-D-ribofuranosyl)aniline 5'-phosphate + diphosphate. The protein operates within cofactor biosynthesis; 5,6,7,8-tetrahydromethanopterin biosynthesis. In terms of biological role, catalyzes the condensation of 6-hydroxymethyl-7,8-dihydropterin pyrophosphate (DHPP) with 4-(beta-D-ribofuranosyl)-aminobenzene-5'-phosphate (beta-RFA-P) to form 7,8-dihydropterin-6-methyl-4-(beta-D-ribofuranosyl)-aminobenzene-5'-phosphate, a precursor in the biosynthesis of 5,6,7,8-tetrahydromethanopterin (H4MPT). To a lesser extent, is able to condense beta-RFA-P with another arylamine, 1-(4-aminophenyl)-1-deoxy-D-ribitol (APDR), to form 7,8-dihydropterin-6-methyl-1-(4-aminophenyl)-1-deoxy-D-ribitol. Dephosphorylated beta-RFA-P is not a substrate. This is 7,8-dihydropterin-6-methyl-4-(beta-D-ribofuranosyl)-aminobenzene-5'-phosphate synthase from Methanocaldococcus jannaschii (strain ATCC 43067 / DSM 2661 / JAL-1 / JCM 10045 / NBRC 100440) (Methanococcus jannaschii).